A 187-amino-acid polypeptide reads, in one-letter code: dCTP deaminase, dUMP-forming (187 aa).

Residues 101–106 and Asp-119 each bind dCTP; that span reads KSSLGR. Residue Glu-129 is the Proton donor/acceptor of the active site. Residues Gln-148, Tyr-162, and Gln-174 each coordinate dCTP.

This sequence belongs to the dCTP deaminase family. As to quaternary structure, homotrimer.

It carries out the reaction dCTP + 2 H2O = dUMP + NH4(+) + diphosphate. Its pathway is pyrimidine metabolism; dUMP biosynthesis; dUMP from dCTP: step 1/1. In terms of biological role, bifunctional enzyme that catalyzes both the deamination of dCTP to dUTP and the hydrolysis of dUTP to dUMP without releasing the toxic dUTP intermediate. This is dCTP deaminase, dUMP-forming from Corynebacterium kroppenstedtii (strain DSM 44385 / JCM 11950 / CIP 105744 / CCUG 35717).